We begin with the raw amino-acid sequence, 528 residues long: Atypical kinase COQ8B, mitochondrial (528 aa).

The chain crosses the membrane as a helical span at residues 93–109 (LASFGGLAVGLGLGALA). The short motif at 151-154 (KIGQ) is the KxGQ motif element. The region spanning 187–419 (MMKVLEEELG…DRVLQKSQDL (233 aa)) is the Protein kinase domain. The AAAS motif signature appears at 212-215 (AAAS). ATP-binding positions include serine 215, lysine 233, and 320–323 (MELA). Aspartate 363 acts as the Proton acceptor in catalysis. 2 residues coordinate ATP: asparagine 368 and aspartate 382.

This sequence belongs to the protein kinase superfamily. ADCK protein kinase family. As to quaternary structure, homodimer; homodimerizes via its transmembrane region. Interacts with COQ6 and COQ7. Interacts with the multi-subunit COQ enzyme complex, composed of at least COQ3, COQ4, COQ5, COQ6, COQ7 and COQ9. As to expression, in the kidney, expressed in glomeruli, predominantly in podocyte foot precesses, as well as in proximal tubules and collecting ducts (at protein level).

The protein localises to the mitochondrion membrane. Its subcellular location is the cytoplasm. The protein resides in the cytosol. It localises to the cell membrane. Its pathway is cofactor biosynthesis; ubiquinone biosynthesis. Functionally, atypical kinase involved in the biosynthesis of coenzyme Q, also named ubiquinone, an essential lipid-soluble electron transporter for aerobic cellular respiration. Its substrate specificity is still unclear: may act as a protein kinase that mediates phosphorylation of COQ3. According to other reports, acts as a small molecule kinase, possibly a lipid kinase that phosphorylates a prenyl lipid in the ubiquinone biosynthesis pathway, as suggested by its ability to bind coenzyme Q lipid intermediates. However, the small molecule kinase activity was not confirmed by another publication. Required for podocyte migration. The chain is Atypical kinase COQ8B, mitochondrial from Rattus norvegicus (Rat).